The chain runs to 1292 residues: Zinc finger protein 423 (1292 aa).

Basic residues predominate over residues M1–S11. 3 disordered regions span residues M1–D21, A33–E70, and A95–Q125. Residues E41–N54 are compositionally biased toward basic and acidic residues. S55 and S58 each carry phosphoserine. The C2H2-type 1; degenerate zinc-finger motif lies at Y75–D101. Residues W110 to Q125 show a composition bias toward polar residues. C2H2-type zinc fingers lie at residues Y146–H168, F174–H196, Y202–H224, F230–H252, F271–H294, L303–H326, and H331–H353. A disordered region spans residues R354–D407. The segment covering S371–S385 has biased composition (low complexity). The segment at Y417–H441 adopts a C2H2-type 9; degenerate zinc-finger fold. 3 consecutive C2H2-type zinc fingers follow at residues H449–H472, F488–H511, and F525–H548. Residues Y571 to H596 form a C2H2-type 13; atypical zinc finger. A disordered region spans residues N598–I635. S612 is subject to Phosphoserine. Over residues S612 to P623 the composition is skewed to low complexity. C2H2-type zinc fingers lie at residues Y640–H662, Q670–H692, Y700–H723, Y728–H751, Y758–H781, H789–H811, and Y815–H838. A C2H2-type 21; degenerate zinc finger spans residues Y894–D916. 3 C2H2-type zinc fingers span residues H938–H960, Y967–H989, and F1028–H1050. S1062 is subject to Phosphoserine. The segment at Y1072–L1090 adopts a C2H2-type 25; degenerate zinc-finger fold. C2H2-type zinc fingers lie at residues L1128 to H1151, Y1176 to H1198, H1206 to H1228, F1237 to H1260, and Y1267 to H1290. Residues E1144–T1155 show a composition bias toward basic and acidic residues. The tract at residues E1144–P1171 is disordered.

It belongs to the krueppel C2H2-type zinc-finger protein family. In terms of assembly, homodimer. Interacts with SMAD1 and SMAD4. Interacts with EBF1. Interacts with PARP1. Interacts with CEP290. As to expression, within the cerebellum, Zfp423 is expressed in both ventricular and external germinal zones. Transiently expressed in newly differentiating olfactory-receptor neurons.

The protein resides in the nucleus. Its function is as follows. Transcription factor that can both act as an activator or a repressor depending on the context. Plays a central role in BMP signaling and olfactory neurogenesis. Associates with SMADs in response to BMP2 leading to activate transcription of BMP target genes. Acts as a transcriptional repressor via its interaction with EBF1, a transcription factor involved in terminal olfactory receptor neurons differentiation; this interaction preventing EBF1 to bind DNA and activate olfactory-specific genes. Involved in olfactory neurogenesis by participating in a developmental switch that regulates the transition from differentiation to maturation in olfactory receptor neurons. Controls proliferation and differentiation of neural precursors in cerebellar vermis formation. This Mus musculus (Mouse) protein is Zinc finger protein 423 (Znf423).